Consider the following 184-residue polypeptide: Adenine phosphoribosyltransferase (184 aa).

The protein belongs to the purine/pyrimidine phosphoribosyltransferase family. In terms of assembly, homodimer.

The protein resides in the cytoplasm. The catalysed reaction is AMP + diphosphate = 5-phospho-alpha-D-ribose 1-diphosphate + adenine. Its pathway is purine metabolism; AMP biosynthesis via salvage pathway; AMP from adenine: step 1/1. Functionally, catalyzes a salvage reaction resulting in the formation of AMP, that is energically less costly than de novo synthesis. This Corynebacterium diphtheriae (strain ATCC 700971 / NCTC 13129 / Biotype gravis) protein is Adenine phosphoribosyltransferase.